The chain runs to 127 residues: Apolipoprotein C-IV (127 aa).

A signal peptide spans 1–27 (MSLLRNRLQDLPALCLCVLVLACIGAC).

Belongs to the apolipoprotein C4 family.

The protein localises to the secreted. May participate in lipoprotein metabolism. This Chlorocebus sabaeus (Green monkey) protein is Apolipoprotein C-IV (APOC4).